Here is a 374-residue protein sequence, read N- to C-terminus: Putative glutamate--cysteine ligase 2 (374 aa).

Belongs to the glutamate--cysteine ligase type 2 family. YbdK subfamily.

It carries out the reaction L-cysteine + L-glutamate + ATP = gamma-L-glutamyl-L-cysteine + ADP + phosphate + H(+). Functionally, ATP-dependent carboxylate-amine ligase which exhibits weak glutamate--cysteine ligase activity. This Acidovorax ebreus (strain TPSY) (Diaphorobacter sp. (strain TPSY)) protein is Putative glutamate--cysteine ligase 2.